We begin with the raw amino-acid sequence, 664 residues long: MFKLVSEFEPTGDQPQAIEKLVEGLNRGMRFQTLLGVTGSGKTFTMANVIARVNRPALVISPNKTLAAQLYQEFKAFFPENRVEFFISYYDYYQPEAYIPTKDLYIEKNADINDVIVRMRMSTLKSVRTRRDVVVVASVSCIYATGDPNDFDRMNINLAVGDRIDVLELAERLARIGYQRTEDVSLSGCFRLKGDTVEIYPTYQDEGIRIEFFGDEVDSITLIDRFNRTTLEHLDKIIIYPAVEFITTEEKLKRAVESIREELNERLSELKKQGKILEYERLKQRTLNDIELLETMGYCPGIENYSRHFDGRKPGEPPYTLLDYFDKDFIVFIDESHITVPQLRAMYNGDRSRKKNLVEYGFRLPSAYDNRPLTFEEFLKKTGQIIFVSATPGDFELSISEQVVEQIIRPTGLVDPEVEVRPTAGQVDDLVNEIVKVKERGERALVTVLTKKTAELLSEHLTELGIRSLYLHSELDAIERVEVLKKLRRGDVDVVVGVNLLREGLDLPEVSLVAIMDADVEGFLRSETTLIQIIGRTARNINGKVIMYADRITNAMKRAIEETNRRRRIQLEYNKKHGITPRSVIKPLEIEVFEQFMVKEEPERYGDTVKNIFEMKKTLSPEEYMAVLEEEMYRAASELRYEDAAALRDELFRIREEIKKKKGL.

Positions 23 to 180 (EGLNRGMRFQ…ERLARIGYQR (158 aa)) constitute a Helicase ATP-binding domain. 36-43 (GVTGSGKT) contacts ATP. The Beta-hairpin signature appears at 89 to 112 (YYDYYQPEAYIPTKDLYIEKNADI). A Helicase C-terminal domain is found at 429–588 (DLVNEIVKVK…ITPRSVIKPL (160 aa)). Residues 622–657 (EEYMAVLEEEMYRAASELRYEDAAALRDELFRIREE) enclose the UVR domain.

It belongs to the UvrB family. Forms a heterotetramer with UvrA during the search for lesions. Interacts with UvrC in an incision complex.

It is found in the cytoplasm. Functionally, the UvrABC repair system catalyzes the recognition and processing of DNA lesions. A damage recognition complex composed of 2 UvrA and 2 UvrB subunits scans DNA for abnormalities. Upon binding of the UvrA(2)B(2) complex to a putative damaged site, the DNA wraps around one UvrB monomer. DNA wrap is dependent on ATP binding by UvrB and probably causes local melting of the DNA helix, facilitating insertion of UvrB beta-hairpin between the DNA strands. Then UvrB probes one DNA strand for the presence of a lesion. If a lesion is found the UvrA subunits dissociate and the UvrB-DNA preincision complex is formed. This complex is subsequently bound by UvrC and the second UvrB is released. If no lesion is found, the DNA wraps around the other UvrB subunit that will check the other stand for damage. The chain is UvrABC system protein B from Thermotoga petrophila (strain ATCC BAA-488 / DSM 13995 / JCM 10881 / RKU-1).